We begin with the raw amino-acid sequence, 457 residues long: tRNA-2-methylthio-N(6)-dimethylallyladenosine synthase (457 aa).

Positions 2 to 119 constitute an MTTase N-terminal domain; that stretch reads KKVFIKTFGC…LPELIDARRR (118 aa). The [4Fe-4S] cluster site is built by cysteine 11, cysteine 48, cysteine 82, cysteine 156, cysteine 160, and cysteine 163. In terms of domain architecture, Radical SAM core spans 142 to 375; the sequence is RVEGPSAFVS…QATIDANMAR (234 aa). Residues 378-448 form the TRAM domain; the sequence is EGMVGSVQRI…PHSLRGDVVE (71 aa).

This sequence belongs to the methylthiotransferase family. MiaB subfamily. Monomer. [4Fe-4S] cluster is required as a cofactor.

The protein localises to the cytoplasm. It carries out the reaction N(6)-dimethylallyladenosine(37) in tRNA + (sulfur carrier)-SH + AH2 + 2 S-adenosyl-L-methionine = 2-methylsulfanyl-N(6)-dimethylallyladenosine(37) in tRNA + (sulfur carrier)-H + 5'-deoxyadenosine + L-methionine + A + S-adenosyl-L-homocysteine + 2 H(+). In terms of biological role, catalyzes the methylthiolation of N6-(dimethylallyl)adenosine (i(6)A), leading to the formation of 2-methylthio-N6-(dimethylallyl)adenosine (ms(2)i(6)A) at position 37 in tRNAs that read codons beginning with uridine. This Ralstonia nicotianae (strain ATCC BAA-1114 / GMI1000) (Ralstonia solanacearum) protein is tRNA-2-methylthio-N(6)-dimethylallyladenosine synthase.